A 221-amino-acid polypeptide reads, in one-letter code: UPF0319 protein NTHI1987 (221 aa).

The first 21 residues, 1–21 (MKLRAVVLGLATLCTSTATFA), serve as a signal peptide directing secretion.

The protein belongs to the UPF0319 family.

This Haemophilus influenzae (strain 86-028NP) protein is UPF0319 protein NTHI1987.